A 37-amino-acid chain; its full sequence is Large ribosomal subunit protein bL36 (37 aa).

This sequence belongs to the bacterial ribosomal protein bL36 family.

This chain is Large ribosomal subunit protein bL36, found in Rhodococcus erythropolis (strain PR4 / NBRC 100887).